A 56-amino-acid chain; its full sequence is PI-stichotoxin-Hmg3c (56 aa).

One can recognise a BPTI/Kunitz inhibitor domain in the interval 4 to 54 (CLEPKVVGPCTAYFPRFYFDSETGKCTPFIYGGCEGNGNNFETLHACRAIC). Cystine bridges form between cysteine 4/cysteine 54, cysteine 13/cysteine 37, and cysteine 29/cysteine 50.

The protein belongs to the venom Kunitz-type family. Sea anemone type 2 potassium channel toxin subfamily. Contains three disulfide bonds.

It is found in the secreted. It localises to the nematocyst. Functionally, serine protease inhibitor that inhibits trypsin (Ki=73.8 nM) and chymotrypsin (Ki=993 nM). The chain is PI-stichotoxin-Hmg3c from Heteractis magnifica (Magnificent sea anemone).